Here is a 271-residue protein sequence, read N- to C-terminus: Small ribosomal subunit protein uS2 (271 aa).

This sequence belongs to the universal ribosomal protein uS2 family.

In Wolbachia pipientis subsp. Culex pipiens (strain wPip), this protein is Small ribosomal subunit protein uS2.